The sequence spans 393 residues: Phospholipase A1-II 1 (393 aa).

Residues 200–220 adopt a coiled-coil conformation; the sequence is QVLNEIKRLQDMYEHEETSIT. Residue serine 225 is the Acyl-ester intermediate of the active site. Catalysis depends on charge relay system residues serine 225, aspartate 284, and histidine 321.

This sequence belongs to the AB hydrolase superfamily. Lipase family.

It localises to the cytoplasm. Its function is as follows. Acylhydrolase that catalyzes the hydrolysis of phospholipids at the sn-1 position. The polypeptide is Phospholipase A1-II 1 (Oryza sativa subsp. indica (Rice)).